The chain runs to 283 residues: Serine/threonine-protein phosphatase Pgam5, mitochondrial (283 aa).

The helical transmembrane segment at 7-23 (MYGLPSAAVAVGTALLN) threads the bilayer.

It belongs to the phosphoglycerate mutase family. BPG-dependent PGAM subfamily. Interacts with skn-1.

The protein resides in the mitochondrion outer membrane. It catalyses the reaction O-phospho-L-seryl-[protein] + H2O = L-seryl-[protein] + phosphate. It carries out the reaction O-phospho-L-threonyl-[protein] + H2O = L-threonyl-[protein] + phosphate. Functionally, displays phosphatase activity for serine/threonine residues. Has apparently no phosphoglycerate mutase activity. This chain is Serine/threonine-protein phosphatase Pgam5, mitochondrial (pgam-5), found in Caenorhabditis briggsae.